Consider the following 360-residue polypeptide: Squamosa promoter-binding-like protein 7 (360 aa).

Residues 74-89 (AQGSGGGGGGGGGGSA) show a composition bias toward gly residues. Residues 74-98 (AQGSGGGGGGGGGGSADQGKRKEKA) form a disordered region. The SBP-type zinc finger occupies 105 to 182 (VPRCQVEGCD…AGHNERRRRS (78 aa)). Zn(2+)-binding residues include Cys108, Cys113, Cys130, His133, Cys149, Cys152, His156, and Cys168. Positions 165–181 (KKSCRRRLAGHNERRRR) match the Bipartite nuclear localization signal motif. Residues 172-182 (LAGHNERRRRS) are compositionally biased toward basic residues. Disordered stretches follow at residues 172-196 (LAGH…AHPH), 261-306 (FFSD…HEHQ), and 320-360 (AAGG…ARVV).

As to expression, expressed in young panicles.

It is found in the nucleus. Functionally, trans-acting factor that binds specifically to the consensus nucleotide sequence 5'-TNCGTACAA-3'. May be involved in panicle development. The sequence is that of Squamosa promoter-binding-like protein 7 (SPL7) from Oryza sativa subsp. indica (Rice).